We begin with the raw amino-acid sequence, 359 residues long: Bergaptol O-methyltransferase (359 aa).

Histidine 126 contributes to the bergaptol binding site. Residues serine 179, glycine 203, aspartate 226, aspartate 246, and lysine 260 each contribute to the S-adenosyl-L-homocysteine site. Residue histidine 264 participates in bergaptol binding. Residue histidine 264 is the Proton acceptor of the active site.

It belongs to the class I-like SAM-binding methyltransferase superfamily. Cation-independent O-methyltransferase family. COMT subfamily.

The catalysed reaction is a 5-hydroxyfurocoumarin + S-adenosyl-L-methionine = a 5-methoxyfurocoumarin + S-adenosyl-L-homocysteine + H(+). It carries out the reaction bergaptol + S-adenosyl-L-methionine = bergapten + S-adenosyl-L-homocysteine. With respect to regulation, inhibited by Cu(2+), Ni(2+) and Co(2+). This chain is Bergaptol O-methyltransferase, found in Glehnia littoralis (Beach silvertop).